Consider the following 522-residue polypeptide: Cytochrome P450 26C1 (522 aa).

Residues 9-29 (LSVLGAAGTALLCAGLLLSLA) traverse the membrane as a helical segment. A heme-binding site is contributed by Cys459.

The protein belongs to the cytochrome P450 family. Heme serves as cofactor. As to expression, detected in most tissues at very low level.

It localises to the membrane. The enzyme catalyses an organic molecule + reduced [NADPH--hemoprotein reductase] + O2 = an alcohol + oxidized [NADPH--hemoprotein reductase] + H2O + H(+). The catalysed reaction is all-trans-retinoate + reduced [NADPH--hemoprotein reductase] + O2 = all-trans-4-hydroxyretinoate + oxidized [NADPH--hemoprotein reductase] + H2O + H(+). It catalyses the reaction all-trans-4-hydroxyretinoate + reduced [NADPH--hemoprotein reductase] + O2 = all-trans-4-oxoretinoate + oxidized [NADPH--hemoprotein reductase] + 2 H2O + H(+). It carries out the reaction 9-cis-retinoate + reduced [NADPH--hemoprotein reductase] + O2 = 9-cis-4-hydroxyretinoate + oxidized [NADPH--hemoprotein reductase] + H2O + H(+). The enzyme catalyses 9-cis-4-hydroxyretinoate + reduced [NADPH--hemoprotein reductase] + O2 = 9-cis-4-oxoretinoate + oxidized [NADPH--hemoprotein reductase] + 2 H2O + H(+). The catalysed reaction is all-trans-4-hydroxy-13,14-dihydroretinoate + reduced [NADPH--hemoprotein reductase] + O2 = all-trans-4-oxo-13,14-dihydroretinoate + oxidized [NADPH--hemoprotein reductase] + 2 H2O + H(+). It catalyses the reaction all-trans-13,14-dihydroretinoate + reduced [NADPH--hemoprotein reductase] + O2 = all-trans-4-hydroxy-13,14-dihydroretinoate + oxidized [NADPH--hemoprotein reductase] + H2O + H(+). In terms of biological role, a cytochrome P450 monooxygenase involved in the metabolism of retinoates (RAs), the active metabolites of vitamin A, and critical signaling molecules in animals. RAs exist as at least four different isomers: all-trans-RA (atRA), 9-cis-RA, 13-cis-RA, and 9,13-dicis-RA, where atRA is considered to be the biologically active isomer, although 9-cis-RA and 13-cis-RA also have activity. Catalyzes the oxidation of atRA primarily at C-4. Oxidation of atRA limits its biological activity and initiates a degradative process leading to its eventual elimination, thereby contributes to the regulation of atRA homeostasis and signaling. Able to metabolize other RAs such as 9-cis with high efficiency. Can oxidize all-trans-13,14-dihydroretinoate (DRA) to metabolites which could include all-trans-4-oxo-DRA, all-trans-4-hydroxy-DRA, all-trans-5,8-epoxy-DRA, and all-trans-18-hydroxy-DRA. Shares sequence similarity with other CYP26 family members, but has higher affinity to 9-cis-RA and is much less sensitive to the inhibitory effects of ketoconazole. In cooperation with Cyp26a1, contributes to the CNS patterning and the development of regions of higher visual acuity. This is Cytochrome P450 26C1 (CYP26C1) from Homo sapiens (Human).